The following is a 362-amino-acid chain: Phosphoserine aminotransferase (362 aa).

An L-glutamate-binding site is contributed by R42. The pyridoxal 5'-phosphate site is built by W102, T154, D174, and Q197. N6-(pyridoxal phosphate)lysine is present on K198. Residue 239 to 240 (NT) participates in pyridoxal 5'-phosphate binding.

It belongs to the class-V pyridoxal-phosphate-dependent aminotransferase family. SerC subfamily. In terms of assembly, homodimer. Pyridoxal 5'-phosphate is required as a cofactor.

Its subcellular location is the cytoplasm. It carries out the reaction O-phospho-L-serine + 2-oxoglutarate = 3-phosphooxypyruvate + L-glutamate. The enzyme catalyses 4-(phosphooxy)-L-threonine + 2-oxoglutarate = (R)-3-hydroxy-2-oxo-4-phosphooxybutanoate + L-glutamate. It participates in amino-acid biosynthesis; L-serine biosynthesis; L-serine from 3-phospho-D-glycerate: step 2/3. Its pathway is cofactor biosynthesis; pyridoxine 5'-phosphate biosynthesis; pyridoxine 5'-phosphate from D-erythrose 4-phosphate: step 3/5. Functionally, catalyzes the reversible conversion of 3-phosphohydroxypyruvate to phosphoserine and of 3-hydroxy-2-oxo-4-phosphonooxybutanoate to phosphohydroxythreonine. The sequence is that of Phosphoserine aminotransferase from Haemophilus ducreyi (strain 35000HP / ATCC 700724).